The primary structure comprises 290 residues: Cell division protein ZipA (290 aa).

A topological domain (periplasmic) is located at residue Met1. The helical transmembrane segment at 2-22 (DIGLREWLIVIGLIVIAGILF) threads the bilayer. Residues 23–290 (DGWRRMRGGK…HERRSLMQKR (268 aa)) are Cytoplasmic-facing. Residues 66–143 (REPSFDEQDL…REKAPSVAAA (78 aa)) are disordered. Residues 81–99 (REGKERKGGKRQDEPRQGD) are compositionally biased toward basic and acidic residues. Acidic residues predominate over residues 100–114 (LDLDEGMALEADPSD).

The protein belongs to the ZipA family. As to quaternary structure, interacts with FtsZ via their C-terminal domains.

Its subcellular location is the cell inner membrane. Essential cell division protein that stabilizes the FtsZ protofilaments by cross-linking them and that serves as a cytoplasmic membrane anchor for the Z ring. Also required for the recruitment to the septal ring of downstream cell division proteins. This chain is Cell division protein ZipA, found in Pseudomonas paraeruginosa (strain DSM 24068 / PA7) (Pseudomonas aeruginosa (strain PA7)).